The chain runs to 545 residues: MSAILSADDLNDFISPGVACIKPPAENVNRDTNNENGEVDIQIDNEGNPIEISRLDGTATSLSAAQISLADCLACSGCITSAEEILVAQHSHNELIKALKEKVQNKTDKVFVASISHQSRASLATAYNLTVEEVDRLLINLFINQMGFSYIVGTSLGRKLSLIYESQNIISKKEEKFEGPTLSSICPGWVLYAEKTHPYVLPRISDVKSPQQITGCLLKTLTARDLNTTRDNIYHLSIMPCFDKKLESARPEKGEPESAPNDVDCVLTAKELITLLDEHSDDFSLFPPQVESILSASLVSTTELYTKCAPKNWPFVDLSWSNDNGSSSGGYAYHYIKLAQEHLILKDPSTYQPENFTLKTISGRNSDIYELRLIYKDATVASAAIVNGFRNIQNLVRKLKPSTKQTSTVKANPLASRRRARLASKTDGTASSNNATQDTADASKCDYVEIMACPNGCINGGGQINPPADVPEKEWLTKASENYTNIPSYDLLSAGSNGNMLSELIEWCQEFCKEFDLNQNRLLKTWFHEVEQSTDPNAILLGAKW.

Residues Cys20, Cys72, Cys75, Cys78, Cys186, and Cys241 each coordinate [4Fe-4S] cluster. Residues 401 to 438 form a disordered region; the sequence is PSTKQTSTVKANPLASRRRARLASKTDGTASSNNATQD. Residues 426–438 are compositionally biased toward polar residues; it reads TDGTASSNNATQD. The [4Fe-4S] cluster site is built by Cys453 and Cys457.

Belongs to the NARF family.

In terms of biological role, component of the cytosolic Fe/S protein assembly machinery. Required for maturation of extramitochondrial Fe/S proteins. May play a role in the transfer of pre-assembled Fe/S clusters to target apoproteins. This is Cytosolic Fe-S cluster assembly factor NAR1 (NAR1) from Debaryomyces hansenii (strain ATCC 36239 / CBS 767 / BCRC 21394 / JCM 1990 / NBRC 0083 / IGC 2968) (Yeast).